A 142-amino-acid polypeptide reads, in one-letter code: Sec-independent protein translocase protein TatB (142 aa).

Residues 2-22 traverse the membrane as a helical segment; it reads FANVGWGEMLVLVIAGLVILG. A disordered region spans residues 89–142; the sequence is DDSIFTGKFDQNGKSEKPEQKPEKPQSAPGPAAAVPDQPAGGRSGSTPYDTDAT. Positions 99 to 112 are enriched in basic and acidic residues; that stretch reads QNGKSEKPEQKPEK. Residues 133 to 142 are compositionally biased toward polar residues; sequence GSTPYDTDAT.

The protein belongs to the TatB family. The Tat system comprises two distinct complexes: a TatABC complex, containing multiple copies of TatA, TatB and TatC subunits, and a separate TatA complex, containing only TatA subunits. Substrates initially bind to the TatABC complex, which probably triggers association of the separate TatA complex to form the active translocon.

The protein localises to the cell membrane. Functionally, part of the twin-arginine translocation (Tat) system that transports large folded proteins containing a characteristic twin-arginine motif in their signal peptide across membranes. Together with TatC, TatB is part of a receptor directly interacting with Tat signal peptides. TatB may form an oligomeric binding site that transiently accommodates folded Tat precursor proteins before their translocation. The polypeptide is Sec-independent protein translocase protein TatB (Mycolicibacterium vanbaalenii (strain DSM 7251 / JCM 13017 / BCRC 16820 / KCTC 9966 / NRRL B-24157 / PYR-1) (Mycobacterium vanbaalenii)).